Here is a 559-residue protein sequence, read N- to C-terminus: Formate--tetrahydrofolate ligase (559 aa).

68–75 (TPAGEGKT) is an ATP binding site.

Belongs to the formate--tetrahydrofolate ligase family.

It carries out the reaction (6S)-5,6,7,8-tetrahydrofolate + formate + ATP = (6R)-10-formyltetrahydrofolate + ADP + phosphate. Its pathway is one-carbon metabolism; tetrahydrofolate interconversion. The chain is Formate--tetrahydrofolate ligase from Sinorhizobium fredii (strain NBRC 101917 / NGR234).